The sequence spans 406 residues: Vacuole membrane protein 1 (406 aa).

The span at 1–21 (MAENGKNCDQRRVAMNKEHHN) shows a compositional bias: basic and acidic residues. The disordered stretch occupies residues 1-35 (MAENGKNCDQRRVAMNKEHHNGNFTDPSSVNEKKR). The residue at position 2 (alanine 2) is an N-acetylalanine. Residues 2–43 (AENGKNCDQRRVAMNKEHHNGNFTDPSSVNEKKRREREERQN) are Cytoplasmic-facing. A helical membrane pass occupies residues 44 to 64 (IVLWRQPLITLQYFSLEILVI). Residues 65–77 (LKEWTSKLWHRQS) are Extracellular-facing. Residues 78–98 (IVVSFLLLLAVLIATYYVEGV) traverse the membrane as a helical segment. At 99 to 109 (HQQYVQRIEKQ) the chain is on the cytoplasmic side. Residues 110–130 (FLLYAYWIGLGILSSVGLGTG) form a helical membrane-spanning segment. At 131–250 (LHTFLLYLGP…ASRAKLAVQK (120 aa)) the chain is on the extracellular side. The segment at 173 to 316 (GTEGTISLWS…FVIITFSKHI (144 aa)) is VTT domain. Residues 251 to 271 (LVQKVGFFGILACASIPNPLF) form a helical membrane-spanning segment. At 272–273 (DL) the chain is on the cytoplasmic side. The helical transmembrane segment at 274–294 (AGITCGHFLVPFWTFFGATLI) threads the bilayer. The Extracellular portion of the chain corresponds to 295 to 305 (GKAIIKMHIQK). The chain crosses the membrane as a helical span at residues 306–326 (IFVIITFSKHIVEQMVAFIGA). At 327–363 (VPGIGPSLQKPFQEYLEAQRQKLHHKSEMGTPQGENW) the chain is on the cytoplasmic side. A helical transmembrane segment spans residues 364 to 384 (LSWMFEKLVVVMVCYFILSII). Residues 385–406 (NSMAQSYAKRIQQRLNSEEKTK) are Extracellular-facing.

The protein belongs to the VMP1 family. In terms of assembly, interacts with BECN1. Interacts with TJP1. Interacts with TP53INP2. Interacts with TMEM41B. Interacts with ATP2A2, PLN and SLN; competes with PLN and SLN to prevent them from forming an inhibitory complex with ATP2A2. Interacts with ATG2A.

It localises to the endoplasmic reticulum-Golgi intermediate compartment membrane. It is found in the cell membrane. Its subcellular location is the vacuole membrane. The protein resides in the endoplasmic reticulum membrane. It catalyses the reaction a 1,2-diacyl-sn-glycero-3-phospho-L-serine(in) = a 1,2-diacyl-sn-glycero-3-phospho-L-serine(out). The enzyme catalyses cholesterol(in) = cholesterol(out). It carries out the reaction a 1,2-diacyl-sn-glycero-3-phosphocholine(in) = a 1,2-diacyl-sn-glycero-3-phosphocholine(out). The catalysed reaction is a 1,2-diacyl-sn-glycero-3-phosphoethanolamine(in) = a 1,2-diacyl-sn-glycero-3-phosphoethanolamine(out). Functionally, phospholipid scramblase involved in lipid homeostasis and membrane dynamics processes. Has phospholipid scramblase activity toward cholesterol and phosphatidylserine, as well as phosphatidylethanolamine and phosphatidylcholine. Required for autophagosome formation: participates in early stages of autophagosome biogenesis at the endoplasmic reticulum (ER) membrane by reequilibrating the leaflets of the ER as lipids are extracted by ATG2 (ATG2A or ATG2B) to mediate autophagosome assembly. Regulates ATP2A2 activity to control ER-isolation membrane contacts for autophagosome formation. In addition to autophagy, involved in other processes in which phospholipid scramblase activity is required. Modulates ER contacts with lipid droplets, mitochondria and endosomes. Plays an essential role in formation of cell junctions. Upon stress such as bacterial and viral infection, promotes formation of cytoplasmic vacuoles followed by cell death. Involved in the cytoplasmic vacuolization of acinar cells during the early stage of acute pancreatitis. In terms of biological role, (Microbial infection) Host factor required for infection by all flaviviruses tested such as Zika virus and Yellow fever virus. Probably required post-entry of the virus to facilitate the ER membrane remodeling necessary to form replication organelles. The polypeptide is Vacuole membrane protein 1 (Homo sapiens (Human)).